The sequence spans 32 residues: Photosystem II reaction center protein T (32 aa).

The helical transmembrane segment at 3–23 (AITYTFILFLTLGLLFFAVAF) threads the bilayer.

Belongs to the PsbT family. In terms of assembly, PSII is composed of 1 copy each of membrane proteins PsbA, PsbB, PsbC, PsbD, PsbE, PsbF, PsbH, PsbI, PsbJ, PsbK, PsbL, PsbM, PsbT, PsbX, PsbY, PsbZ, Psb30/Ycf12, peripheral proteins PsbO, CyanoQ (PsbQ), PsbU, PsbV and a large number of cofactors. It forms dimeric complexes.

It is found in the cellular thylakoid membrane. Functionally, found at the monomer-monomer interface of the photosystem II (PS II) dimer, plays a role in assembly and dimerization of PSII. PSII is a light-driven water plastoquinone oxidoreductase, using light energy to abstract electrons from H(2)O, generating a proton gradient subsequently used for ATP formation. This chain is Photosystem II reaction center protein T, found in Synechococcus sp. (strain JA-2-3B'a(2-13)) (Cyanobacteria bacterium Yellowstone B-Prime).